Consider the following 60-residue polypeptide: Large ribosomal subunit protein bL32 (60 aa).

The protein belongs to the bacterial ribosomal protein bL32 family.

This is Large ribosomal subunit protein bL32 from Borrelia duttonii (strain Ly).